Consider the following 144-residue polypeptide: Ribosome-binding factor A (144 aa).

A disordered region spans residues Asp-120–Ala-144. Over residues Arg-129–Ala-144 the composition is skewed to acidic residues.

This sequence belongs to the RbfA family. As to quaternary structure, monomer. Binds 30S ribosomal subunits, but not 50S ribosomal subunits or 70S ribosomes.

It is found in the cytoplasm. Functionally, one of several proteins that assist in the late maturation steps of the functional core of the 30S ribosomal subunit. Associates with free 30S ribosomal subunits (but not with 30S subunits that are part of 70S ribosomes or polysomes). Required for efficient processing of 16S rRNA. May interact with the 5'-terminal helix region of 16S rRNA. This is Ribosome-binding factor A from Aeromonas salmonicida (strain A449).